The following is a 660-amino-acid chain: Acetyl-coenzyme A synthetase (660 aa).

CoA contacts are provided by residues 197-200 and threonine 317; that span reads RGGK. Residues 397-399, 421-426, aspartate 512, and arginine 528 each bind ATP; these read GEP and DTFWQT. Serine 536 is a binding site for CoA. Residue arginine 539 coordinates ATP. Residues valine 550 and valine 555 each coordinate Mg(2+). Residue lysine 625 is modified to N6-acetyllysine.

This sequence belongs to the ATP-dependent AMP-binding enzyme family. Mg(2+) serves as cofactor. Acetylated. Deacetylation by the SIR2-homolog deacetylase activates the enzyme.

It catalyses the reaction acetate + ATP + CoA = acetyl-CoA + AMP + diphosphate. Its function is as follows. Catalyzes the conversion of acetate into acetyl-CoA (AcCoA), an essential intermediate at the junction of anabolic and catabolic pathways. AcsA undergoes a two-step reaction. In the first half reaction, AcsA combines acetate with ATP to form acetyl-adenylate (AcAMP) intermediate. In the second half reaction, it can then transfer the acetyl group from AcAMP to the sulfhydryl group of CoA, forming the product AcCoA. The protein is Acetyl-coenzyme A synthetase of Ralstonia nicotianae (strain ATCC BAA-1114 / GMI1000) (Ralstonia solanacearum).